Reading from the N-terminus, the 262-residue chain is Protein Pcal_0062 (262 aa).

This sequence belongs to the CinA family.

This is Protein Pcal_0062 from Pyrobaculum calidifontis (strain DSM 21063 / JCM 11548 / VA1).